The chain runs to 181 residues: MVFMLEDIYERIVRIREEGCRECLKVVCRMDDFQFNQLMSRLDLQIEITSRYSPPVRPALDPMISTELGVYRGDDENIGRLLGYPECCIRSFSENTRYAIDGEHLAEVSELDIPEGKCAIIMPSGFIPCSLRCQEAWERKLIGFADRDEFRRILELEDELMMRLPHFHLAYDEYFEKIVLE.

It to M.jannaschii MJ1106.

This is an uncharacterized protein from Methanothermobacter thermautotrophicus (strain ATCC 29096 / DSM 1053 / JCM 10044 / NBRC 100330 / Delta H) (Methanobacterium thermoautotrophicum).